The chain runs to 439 residues: 26S proteasome regulatory subunit 6A (439 aa).

The residue at position 1 (M1) is an N-acetylmethionine. Phosphoserine is present on S9. 227–234 provides a ligand contact to ATP; that stretch reads GPPGTGKT. S376 is modified (phosphoserine).

This sequence belongs to the AAA ATPase family. As to quaternary structure, component of the 19S proteasome regulatory particle complex. The 26S proteasome consists of a 20S core particle (CP) and two 19S regulatory subunits (RP). The regulatory particle is made of a lid composed of 9 subunits, a base containing 6 ATPases including PSMC3 and few additional components. Interacts with PAAF1. In terms of assembly, (Microbial infection) Interacts with HIV-1 Tat. Sumoylated by UBE2I in response to MEKK1-mediated stimuli.

Its subcellular location is the cytoplasm. The protein resides in the nucleus. Its function is as follows. Component of the 26S proteasome, a multiprotein complex involved in the ATP-dependent degradation of ubiquitinated proteins. This complex plays a key role in the maintenance of protein homeostasis by removing misfolded or damaged proteins, which could impair cellular functions, and by removing proteins whose functions are no longer required. Therefore, the proteasome participates in numerous cellular processes, including cell cycle progression, apoptosis, or DNA damage repair. PSMC3 belongs to the heterohexameric ring of AAA (ATPases associated with diverse cellular activities) proteins that unfolds ubiquitinated target proteins that are concurrently translocated into a proteolytic chamber and degraded into peptides. This is 26S proteasome regulatory subunit 6A (PSMC3) from Homo sapiens (Human).